A 200-amino-acid polypeptide reads, in one-letter code: ASI1-immunoprecipitated protein 1 (200 aa).

The RRM domain maps to 18–101; that stretch reads RTVYVDELTP…RPVRACAAEP (84 aa).

Component of the ASI1-AIPP1-EDM2 (AAE) RNA regulatory complex composed of at least AIPP1/EDM3, ASI1 and EDM2 and may contain CPL2, AIPP2 and AIPP3/BDT1. Binds directly to ASI1 and EDM2 and may function as a bridge protein between them. Co-associates with EDM2 to histone H3 lysine 9 dimethylation (H3K9me2)-marked chromatin and transcripts at a critical proximal polyadenylation site of RPP7 to hamper proximal transcript polyadeylation/termination.

The protein localises to the nucleus. Prevents gene silencing by suppressing CHG methylation as well as histone H3 lysine 9 dimethylation (H3K9me2) status at target loci. Collaboratively with ASI1 and EDM2, the AAE complex regulates alternative RNA processing (e.g. alternative splicing) and epigenetic silencing (e.g. H3K9me2) of intronic heterochromatin-containing genes as well as genic heterochromatin-containing genes by promoting distal 3' polyadenylation, thus being required for the accumulation of their full-length transcripts. May also modulate transposable elements (TE) expression. Mediates RPP7-dependent race-specific disease resistance by promoting histone H3 lysine 9 dimethylation (H3K9me2) at the proximal RPP7 polyadenylation site, thus controlling alternative polyadenylation of RPP7 immune receptor transcripts and facilitating 2-phosphoserine RNAPII occupancy. In cv. Columbia, required for RPP7-dependent disease resistance against the Hyaloperonospora arabidopsidis isolate Hiks1. This is ASI1-immunoprecipitated protein 1 from Arabidopsis thaliana (Mouse-ear cress).